The chain runs to 1291 residues: MEIQQTHRKINRPLVSLALVGALVSITPQQSHAAFFTTVIIPAIVGGIATGAAVGTVSGLLGWGLKQAEEANKTPDKPDKVWRIQAGKGFNEFPNKEYDLYKSLLSSKIDGGWDWGNAARHYWVKDGQWNKLEVDMQNAVGTYNLSGLINFTGGDLDVNMQKATLRLGQFNGNSFTSYKDSADRTTRVDFNAKNILIDNFLEINNRVGSGAGRKASSTVLTLQASEGITSRENAEISLYDGATLNLASNSVKLMGNVWMGRLQYVGAYLAPSYSTINTSKVTGEVNFNHLTVGDHNAAQAGIIASNKTHIGTLDLWQSAGLNIIAPPEGGYKDKPNDKPSNTTQNNAKNDKQESSQNNSNTQVINPPNSAQKTEIQPTQVIDGPFAGGKNTVVNINRINTNADGTIRVGGFKASLTTNAAHLHIGKGGINLSNQASGRSLLVENLTGNITVDGPLRVNNQVGGYALAGSSANFEFKAGTDTKNGTATFNNDISLGRFVNLKVDAHTANFKGIDTGNGGFNTLDFSGVTNKVNINKLITASTNVAVKNFNINELVVKTNGVSVGEYTHFSEDIGSQSRINTVRLETGTRSIYSGGVKFKGGEKLVINDFYYAPWNYFDARNIKNVEITNKLAFGPQGSPWGTAKLMFNNLTLGQNAVMDYSQFSNLTIQGDFVNNQGTINYLVRGGQVATLNVGNAAAMFFSNNVDSATGFYQPLMKINSAQDLIKNKEHVLLKAKIIGYGNVSAGTDSIANVNLIEQFKERLALYNNNNRMDICVVRNTDDIKACGTAIGNQSMVNNPENYKYLEGKAWKNIGISKTANGSKISVHYLGNSTPTENGGNTTNLPTNTTNKVRFASYALIKNAPFARYSATPNLVAINQHDFGTIESVFELANRSNDIDTLYANSGAQGRDLLQTLLIDSHDAGYARTMIDATSANEITKQLNTATTTLNNIASLEHKTSGLQTLSLSNAMILNSRLVNLSRRHTNHIDSFAKRLQALKDQRFASLESAAEVLYQFAPKYEKPTNVWANAIGGTSLNSGGNASLYGTSAGVDAYLNGEVEAIVGGFGSYGYSSFSNQANSLNSGANNTNFGVYSRIFANQHEFDFEAQGALGSDQSSLNFKSALLRDLNQSYNYLAYSAATRASYGYDFAFFRNALVLKPSVGVSYNHLGSTNFKSNSNQKVALKNGASSQHLFNASANVEARYYYGDTSYFYMNAGVLQEFANFGSSNAVSLNTFKVNATRNPLNTHARVMMGGELKLAKEVFLNLGFVYLHNLISNIGHFASNLGMRYSF.

The signal sequence occupies residues 1 to 33 (MEIQQTHRKINRPLVSLALVGALVSITPQQSHA). Residues 326 to 374 (PPEGGYKDKPNDKPSNTTQNNAKNDKQESSQNNSNTQVINPPNSAQKTE) form a disordered region. Composition is skewed to polar residues over residues 338-347 (KPSNTTQNNA) and 354-374 (SSQN…QKTE). Residues 1018-1291 (KYEKPTNVWA…ASNLGMRYSF (274 aa)) form the Autotransporter domain.

The protein resides in the periplasm. The protein localises to the secreted. It localises to the cell surface. It is found in the cell outer membrane. Functionally, induces vacuolation of eukaryotic cells. Causes ulceration and gastric lesions. This is Vacuolating cytotoxin autotransporter (vacA) from Helicobacter pylori (Campylobacter pylori).